The sequence spans 453 residues: Ribosomal protein uS12 methylthiotransferase RimO (453 aa).

The region spanning 6-116 (PKVGFVSLGC…VMEAVHEALP (111 aa)) is the MTTase N-terminal domain. [4Fe-4S] cluster is bound by residues Cys-15, Cys-51, Cys-80, Cys-147, Cys-151, and Cys-154. A Radical SAM core domain is found at 133 to 370 (LTPRHYAYLK…MEKQAQISAA (238 aa)). Residues 373-441 (EAKIGTVQQC…EHDLYGDALP (69 aa)) form the TRAM domain.

It belongs to the methylthiotransferase family. RimO subfamily. Requires [4Fe-4S] cluster as cofactor.

The protein localises to the cytoplasm. The catalysed reaction is L-aspartate(89)-[ribosomal protein uS12]-hydrogen + (sulfur carrier)-SH + AH2 + 2 S-adenosyl-L-methionine = 3-methylsulfanyl-L-aspartate(89)-[ribosomal protein uS12]-hydrogen + (sulfur carrier)-H + 5'-deoxyadenosine + L-methionine + A + S-adenosyl-L-homocysteine + 2 H(+). In terms of biological role, catalyzes the methylthiolation of an aspartic acid residue of ribosomal protein uS12. This Stenotrophomonas maltophilia (strain K279a) protein is Ribosomal protein uS12 methylthiotransferase RimO.